Consider the following 338-residue polypeptide: Glycerol-3-phosphate dehydrogenase [NAD(P)+] (338 aa).

4 residues coordinate NADPH: serine 14, tyrosine 15, histidine 35, and lysine 109. Sn-glycerol 3-phosphate is bound by residues lysine 109, glycine 138, and threonine 140. Alanine 142 serves as a coordination point for NADPH. 5 residues coordinate sn-glycerol 3-phosphate: lysine 194, aspartate 247, serine 257, arginine 258, and asparagine 259. Lysine 194 functions as the Proton acceptor in the catalytic mechanism. Position 258 (arginine 258) interacts with NADPH. Valine 282 and glutamate 284 together coordinate NADPH.

This sequence belongs to the NAD-dependent glycerol-3-phosphate dehydrogenase family.

It is found in the cytoplasm. It catalyses the reaction sn-glycerol 3-phosphate + NAD(+) = dihydroxyacetone phosphate + NADH + H(+). The enzyme catalyses sn-glycerol 3-phosphate + NADP(+) = dihydroxyacetone phosphate + NADPH + H(+). The protein operates within membrane lipid metabolism; glycerophospholipid metabolism. Functionally, catalyzes the reduction of the glycolytic intermediate dihydroxyacetone phosphate (DHAP) to sn-glycerol 3-phosphate (G3P), the key precursor for phospholipid synthesis. This is Glycerol-3-phosphate dehydrogenase [NAD(P)+] from Shewanella frigidimarina (strain NCIMB 400).